The primary structure comprises 393 residues: NAD(P)H-quinone oxidoreductase subunit H, chloroplastic (393 aa).

This sequence belongs to the complex I 49 kDa subunit family. NDH is composed of at least 16 different subunits, 5 of which are encoded in the nucleus.

The protein localises to the plastid. The protein resides in the chloroplast thylakoid membrane. The catalysed reaction is a plastoquinone + NADH + (n+1) H(+)(in) = a plastoquinol + NAD(+) + n H(+)(out). It carries out the reaction a plastoquinone + NADPH + (n+1) H(+)(in) = a plastoquinol + NADP(+) + n H(+)(out). Functionally, NDH shuttles electrons from NAD(P)H:plastoquinone, via FMN and iron-sulfur (Fe-S) centers, to quinones in the photosynthetic chain and possibly in a chloroplast respiratory chain. The immediate electron acceptor for the enzyme in this species is believed to be plastoquinone. Couples the redox reaction to proton translocation, and thus conserves the redox energy in a proton gradient. In Cicer arietinum (Chickpea), this protein is NAD(P)H-quinone oxidoreductase subunit H, chloroplastic.